A 417-amino-acid chain; its full sequence is Sterile alpha motif domain-containing protein 14 (417 aa).

The interval 37–306 is disordered; the sequence is LLVKGRRHRP…QETKCSYPYH (270 aa). Positions 40–49 are enriched in basic residues; that stretch reads KGRRHRPSRS. 2 positions are modified to phosphoserine: S84 and S108. Residues 138-153 show a composition bias toward low complexity; that stretch reads SGSPPRSAPSSDSSPS. Basic and acidic residues predominate over residues 159–173; sequence PRAEPHSEDDSRDAS. Phosphoserine is present on residues S173 and S179. Composition is skewed to low complexity over residues 244–260 and 276–289; these read SGKGSASSGSTTSPTCS and STLSDDSTPPSSSP. Phosphoserine is present on S279. The residue at position 283 (T283) is a Phosphothreonine. The SAM domain maps to 326 to 389; the sequence is WTSQQVGQWL…KRKLKELAAA (64 aa). Residues 375–416 adopt a coiled-coil conformation; that stretch reads DRALVKRKLKELAAAAEKERKAQEKTARQREKLRRREHEAKK. The interval 390-417 is disordered; the sequence is AEKERKAQEKTARQREKLRRREHEAKKS.

The polypeptide is Sterile alpha motif domain-containing protein 14 (Samd14) (Rattus norvegicus (Rat)).